The chain runs to 175 residues: Large ribosomal subunit protein bL17 (175 aa).

A disordered region spans residues 127 to 175 (GEAEAATKRAVKEDALKKDEAPAAESVEDAKPAEDAPAAEAADDKGKDA). Positions 131–147 (AATKRAVKEDALKKDEA) are enriched in basic and acidic residues.

Belongs to the bacterial ribosomal protein bL17 family. As to quaternary structure, part of the 50S ribosomal subunit. Contacts protein L32.

The protein is Large ribosomal subunit protein bL17 of Streptomyces griseus subsp. griseus (strain JCM 4626 / CBS 651.72 / NBRC 13350 / KCC S-0626 / ISP 5235).